Here is a 518-residue protein sequence, read N- to C-terminus: Protein nucleotidyltransferase YdiU (518 aa).

Residues G100, G102, R103, K123, D135, G136, R193, and R200 each contribute to the ATP site. D270 (proton acceptor) is an active-site residue. Residues N271 and D280 each coordinate Mg(2+). D280 lines the ATP pocket.

The protein belongs to the SELO family. The cofactor is Mg(2+). It depends on Mn(2+) as a cofactor.

It carries out the reaction L-seryl-[protein] + ATP = 3-O-(5'-adenylyl)-L-seryl-[protein] + diphosphate. It catalyses the reaction L-threonyl-[protein] + ATP = 3-O-(5'-adenylyl)-L-threonyl-[protein] + diphosphate. The enzyme catalyses L-tyrosyl-[protein] + ATP = O-(5'-adenylyl)-L-tyrosyl-[protein] + diphosphate. The catalysed reaction is L-histidyl-[protein] + UTP = N(tele)-(5'-uridylyl)-L-histidyl-[protein] + diphosphate. It carries out the reaction L-seryl-[protein] + UTP = O-(5'-uridylyl)-L-seryl-[protein] + diphosphate. It catalyses the reaction L-tyrosyl-[protein] + UTP = O-(5'-uridylyl)-L-tyrosyl-[protein] + diphosphate. In terms of biological role, nucleotidyltransferase involved in the post-translational modification of proteins. It can catalyze the addition of adenosine monophosphate (AMP) or uridine monophosphate (UMP) to a protein, resulting in modifications known as AMPylation and UMPylation. The sequence is that of Protein nucleotidyltransferase YdiU from Xanthomonas oryzae pv. oryzae (strain PXO99A).